The following is a 91-amino-acid chain: PqqA binding protein (91 aa).

Belongs to the PqqD family. In terms of assembly, monomer. Interacts with PqqE.

It functions in the pathway cofactor biosynthesis; pyrroloquinoline quinone biosynthesis. Its function is as follows. Functions as a PqqA binding protein and presents PqqA to PqqE, in the pyrroloquinoline quinone (PQQ) biosynthetic pathway. This is PqqA binding protein from Pseudomonas fluorescens (strain Pf0-1).